A 540-amino-acid chain; its full sequence is (13S,14R)-13-O-acetyl-1-hydroxy-N-methylcanadine 8-hydroxylase CYP82X1 (540 aa).

The chain crosses the membrane as a helical span at residues 15-35; it reads FSIILVTTVSIVLLYSVFFWV. C483 contributes to the heme binding site.

This sequence belongs to the cytochrome P450 family. Requires heme as cofactor. In terms of tissue distribution, highly expressed in capsules. Expressed is stems.

The protein resides in the membrane. The catalysed reaction is (13S,14R)-13-O-acetyl-1-hydroxy-N-methylcanadine + reduced [NADPH--hemoprotein reductase] + O2 = (13S,14R)-13-O-acetyl-1,8-dihydroxy-N-methylcanadine + oxidized [NADPH--hemoprotein reductase] + H2O + H(+). It functions in the pathway alkaloid biosynthesis. Functionally, cytochrome P450 involved in the biosynthesis of the benzylisoquinoline alkaloid noscapine. Converts (13S,14R)-13-O-acetyl-1-hydroxy-N-methylcanadine to (13S,14R)-13-O-acetyl-1,8-dihydroxy-N-methylcanadine. This Papaver somniferum (Opium poppy) protein is (13S,14R)-13-O-acetyl-1-hydroxy-N-methylcanadine 8-hydroxylase CYP82X1.